Consider the following 87-residue polypeptide: Kappa-6-bungarotoxin (87 aa).

The signal sequence occupies residues Met1–Thr21. 5 disulfides stabilise this stretch: Cys24/Cys42, Cys35/Cys63, Cys48/Cys52, Cys67/Cys79, and Cys80/Cys85.

It belongs to the three-finger toxin family. Long-chain subfamily. Kappa-neurotoxin sub-subfamily. Homo- and heterodimer; non-covalently linked. As to expression, expressed by the venom gland.

The protein resides in the secreted. Postsynaptic neurotoxin that binds and inhibits neuronal nicotinic acetylcholine receptors (nAChR) with high affinity (IC(50)&lt;100 nM). Is a selective, and slowly reversible antagonist of alpha-3/CHRNA3-containing and some alpha-4/CHRNA4-containing AChRs. This is Kappa-6-bungarotoxin from Bungarus multicinctus (Many-banded krait).